Here is a 285-residue protein sequence, read N- to C-terminus: Secreted alkaline triacylglycerol lipase (285 aa).

The first 20 residues, 1 to 20 (MLFNYQSLLVGVSLISQALS), serve as a signal peptide directing secretion. S159 functions as the Nucleophile in the catalytic mechanism. Active-site charge relay system residues include D215 and H268.

Belongs to the AB hydrolase superfamily. FaeA family.

It localises to the secreted. The enzyme catalyses a triacylglycerol + H2O = a diacylglycerol + a fatty acid + H(+). In terms of biological role, secreted alkaline lipase that hydrolyzes acylglycerol lipids such as triacylglycerols and consequently releases free fatty acid. Is able to hydrolyze tributyrin (1,2,3-tributyryl-glycerin). This chain is Secreted alkaline triacylglycerol lipase, found in Penicillium cyclopium.